The sequence spans 145 residues: Ribosome maturation factor RimP (145 aa).

The protein belongs to the RimP family.

The protein resides in the cytoplasm. In terms of biological role, required for maturation of 30S ribosomal subunits. The polypeptide is Ribosome maturation factor RimP (Borrelia garinii subsp. bavariensis (strain ATCC BAA-2496 / DSM 23469 / PBi) (Borreliella bavariensis)).